The primary structure comprises 514 residues: Bifunctional purine biosynthesis protein PurH (514 aa).

The 146-residue stretch at Met-1–Cys-146 folds into the MGS-like domain.

The protein belongs to the PurH family.

It catalyses the reaction (6R)-10-formyltetrahydrofolate + 5-amino-1-(5-phospho-beta-D-ribosyl)imidazole-4-carboxamide = 5-formamido-1-(5-phospho-D-ribosyl)imidazole-4-carboxamide + (6S)-5,6,7,8-tetrahydrofolate. The enzyme catalyses IMP + H2O = 5-formamido-1-(5-phospho-D-ribosyl)imidazole-4-carboxamide. It functions in the pathway purine metabolism; IMP biosynthesis via de novo pathway; 5-formamido-1-(5-phospho-D-ribosyl)imidazole-4-carboxamide from 5-amino-1-(5-phospho-D-ribosyl)imidazole-4-carboxamide (10-formyl THF route): step 1/1. Its pathway is purine metabolism; IMP biosynthesis via de novo pathway; IMP from 5-formamido-1-(5-phospho-D-ribosyl)imidazole-4-carboxamide: step 1/1. In Nostoc punctiforme (strain ATCC 29133 / PCC 73102), this protein is Bifunctional purine biosynthesis protein PurH.